Consider the following 123-residue polypeptide: Ribulose bisphosphate carboxylase small subunit, chloroplastic 1 (123 aa).

Residue methionine 1 is modified to Methionine derivative.

Belongs to the RuBisCO small chain family. As to quaternary structure, heterohexadecamer of 8 large and 8 small subunits.

The protein localises to the plastid. It localises to the chloroplast. In terms of biological role, ruBisCO catalyzes two reactions: the carboxylation of D-ribulose 1,5-bisphosphate, the primary event in carbon dioxide fixation, as well as the oxidative fragmentation of the pentose substrate. Both reactions occur simultaneously and in competition at the same active site. Although the small subunit is not catalytic it is essential for maximal activity. This chain is Ribulose bisphosphate carboxylase small subunit, chloroplastic 1, found in Spinacia oleracea (Spinach).